Here is a 366-residue protein sequence, read N- to C-terminus: Peptide chain release factor 1 (366 aa).

An N5-methylglutamine modification is found at Gln-239.

This sequence belongs to the prokaryotic/mitochondrial release factor family. Post-translationally, methylated by PrmC. Methylation increases the termination efficiency of RF1.

It is found in the cytoplasm. In terms of biological role, peptide chain release factor 1 directs the termination of translation in response to the peptide chain termination codons UAG and UAA. This is Peptide chain release factor 1 from Baumannia cicadellinicola subsp. Homalodisca coagulata.